The primary structure comprises 188 residues: Josephin-2 (188 aa).

One can recognise a Josephin domain in the interval 11-188; sequence PPSVYHERQR…EEAGCWLNTS (178 aa). Residue cysteine 24 is the Nucleophile of the active site. Histidine 125 acts as the Proton acceptor in catalysis.

The protein resides in the cytoplasm. The protein localises to the cytosol. The catalysed reaction is Thiol-dependent hydrolysis of ester, thioester, amide, peptide and isopeptide bonds formed by the C-terminal Gly of ubiquitin (a 76-residue protein attached to proteins as an intracellular targeting signal).. Cleaves 'Lys-63'-linked poly-ubiquitin chains, and with lesser efficiency 'Lys-48'-linked poly-ubiquitin chains (in vitro). May act as a deubiquitinating enzyme. This chain is Josephin-2 (Josd2), found in Mus musculus (Mouse).